The sequence spans 328 residues: Spermatogenesis- and oogenesis-specific basic helix-loop-helix-containing protein 1 (328 aa).

In terms of domain architecture, bHLH spans 53–104 (SCLRRNVISERERRKRMSLSCERLRALLPQFDGRREDMASVLEMSVQFLRLA). Positions 290–328 (EAGSALGSDVDDGTSFLLTAGPSSWPGEWGPGFRAGPPA) are disordered. Residues 310–321 (GPSSWPGEWGPG) show a composition bias toward low complexity.

In terms of assembly, forms both hetero- and homodimers with SOHLH2.

It is found in the cytoplasm. The protein localises to the nucleus. In terms of biological role, transcription regulator of both male and female germline differentiation. Suppresses genes involved in spermatogonial stem cells maintenance, and induces genes important for spermatogonial differentiation. Coordinates oocyte differentiation without affecting meiosis I. This is Spermatogenesis- and oogenesis-specific basic helix-loop-helix-containing protein 1 (SOHLH1) from Homo sapiens (Human).